The primary structure comprises 475 residues: Bifunctional protein HldE (475 aa).

The ribokinase stretch occupies residues 1–321 (MADKIDISLY…RALHQITASH (321 aa)). 197 to 200 (NLKE) is an ATP binding site. D266 is a catalytic residue. Residues 346 to 475 (MTNGCFDILH…TSRLVEKMLN (130 aa)) are cytidylyltransferase.

It in the N-terminal section; belongs to the carbohydrate kinase PfkB family. In the C-terminal section; belongs to the cytidylyltransferase family. In terms of assembly, homodimer.

The catalysed reaction is D-glycero-beta-D-manno-heptose 7-phosphate + ATP = D-glycero-beta-D-manno-heptose 1,7-bisphosphate + ADP + H(+). It carries out the reaction D-glycero-beta-D-manno-heptose 1-phosphate + ATP + H(+) = ADP-D-glycero-beta-D-manno-heptose + diphosphate. Its pathway is nucleotide-sugar biosynthesis; ADP-L-glycero-beta-D-manno-heptose biosynthesis; ADP-L-glycero-beta-D-manno-heptose from D-glycero-beta-D-manno-heptose 7-phosphate: step 1/4. The protein operates within nucleotide-sugar biosynthesis; ADP-L-glycero-beta-D-manno-heptose biosynthesis; ADP-L-glycero-beta-D-manno-heptose from D-glycero-beta-D-manno-heptose 7-phosphate: step 3/4. Its function is as follows. Catalyzes the phosphorylation of D-glycero-D-manno-heptose 7-phosphate at the C-1 position to selectively form D-glycero-beta-D-manno-heptose-1,7-bisphosphate. Functionally, catalyzes the ADP transfer from ATP to D-glycero-beta-D-manno-heptose 1-phosphate, yielding ADP-D-glycero-beta-D-manno-heptose. This Coxiella burnetii (strain RSA 331 / Henzerling II) protein is Bifunctional protein HldE.